The primary structure comprises 198 residues: Recombination protein RecR (198 aa).

The C4-type zinc-finger motif lies at 57 to 72 (CSICGRLTDDDPCSIC). The Toprim domain occupies 80–175 (TTILVLEDSR…KVTRLARGLA (96 aa)).

Belongs to the RecR family.

Its function is as follows. May play a role in DNA repair. It seems to be involved in an RecBC-independent recombinational process of DNA repair. It may act with RecF and RecO. In Streptococcus pneumoniae serotype 2 (strain D39 / NCTC 7466), this protein is Recombination protein RecR.